We begin with the raw amino-acid sequence, 344 residues long: Ribosomal RNA large subunit methyltransferase Cfr (344 aa).

Glu-90 (proton acceptor) is an active-site residue. Residues 97–330 (KQGWESFCIS…ATVRTQFGSE (234 aa)) enclose the Radical SAM core domain. Cysteines 104 and 335 form a disulfide. Positions 111, 115, and 118 each coordinate [4Fe-4S] cluster. Residues 157-158 (GE), Ser-188, 211-213 (SLH), and Asn-292 each bind S-adenosyl-L-methionine. The S-methylcysteine intermediate role is filled by Cys-335.

It belongs to the radical SAM superfamily. RlmN family. Cfr subfamily. It depends on [4Fe-4S] cluster as a cofactor.

It is found in the cytoplasm. The catalysed reaction is adenosine(2503) in 23S rRNA + 2 reduced [2Fe-2S]-[ferredoxin] + 2 S-adenosyl-L-methionine = 8-methyladenosine(2503) in 23S rRNA + 5'-deoxyadenosine + L-methionine + 2 oxidized [2Fe-2S]-[ferredoxin] + S-adenosyl-L-homocysteine. Specifically methylates position 8 of adenine 2503 in 23S rRNA. Confers resistance to some classes of antibiotics. The protein is Ribosomal RNA large subunit methyltransferase Cfr of Clostridium botulinum (strain Okra / Type B1).